The sequence spans 527 residues: Glutamate--cysteine ligase (527 aa).

The protein belongs to the glutamate--cysteine ligase type 1 family. Type 1 subfamily.

The enzyme catalyses L-cysteine + L-glutamate + ATP = gamma-L-glutamyl-L-cysteine + ADP + phosphate + H(+). Its pathway is sulfur metabolism; glutathione biosynthesis; glutathione from L-cysteine and L-glutamate: step 1/2. In Bordetella petrii (strain ATCC BAA-461 / DSM 12804 / CCUG 43448), this protein is Glutamate--cysteine ligase.